The primary structure comprises 182 residues: Ribosome-recycling factor (182 aa).

The protein belongs to the RRF family.

Its subcellular location is the cytoplasm. Its function is as follows. Responsible for the release of ribosomes from messenger RNA at the termination of protein biosynthesis. May increase the efficiency of translation by recycling ribosomes from one round of translation to another. The protein is Ribosome-recycling factor of Hydrogenobaculum sp. (strain Y04AAS1).